The primary structure comprises 310 residues: Acetylglutamate kinase (310 aa).

Residues 74 to 75, Arg-96, and Asn-201 contribute to the substrate site; that span reads GG.

The protein belongs to the acetylglutamate kinase family. ArgB subfamily.

It is found in the cytoplasm. It catalyses the reaction N-acetyl-L-glutamate + ATP = N-acetyl-L-glutamyl 5-phosphate + ADP. It participates in amino-acid biosynthesis; L-arginine biosynthesis; N(2)-acetyl-L-ornithine from L-glutamate: step 2/4. Functionally, catalyzes the ATP-dependent phosphorylation of N-acetyl-L-glutamate. This Arthrobacter sp. (strain FB24) protein is Acetylglutamate kinase.